We begin with the raw amino-acid sequence, 374 residues long: WAT1-related protein At2g39510 (374 aa).

A run of 10 helical transmembrane segments spans residues 9–29 (FITV…AKFA), 38–58 (VLAS…AYFL), 64–84 (PKMT…EPTI), 99–119 (TFTA…AWIF), 135–155 (ILGT…KGPL), 182–202 (GASL…LQAI), 212–232 (SLTA…ALFI), 249–269 (LAAV…QGVI), 284–304 (LSMV…MFLG), and 306–326 (ILGA…KSKD). EamA domains lie at 19 to 147 (YAGL…GAML) and 191 to 320 (ICWA…YSVL). The interval 350 to 374 (SKANAKMDTNDASVVISRPNTNESV) is disordered.

It belongs to the drug/metabolite transporter (DMT) superfamily. Plant drug/metabolite exporter (P-DME) (TC 2.A.7.4) family.

Its subcellular location is the membrane. The chain is WAT1-related protein At2g39510 from Arabidopsis thaliana (Mouse-ear cress).